We begin with the raw amino-acid sequence, 490 residues long: Glucose-6-phosphate 1-dehydrogenase (490 aa).

NADP(+) contacts are provided by residues arginine 48, 90-91 (DI), and lysine 145. Histidine 175, lysine 179, glutamate 213, and aspartate 232 together coordinate substrate. Residue histidine 237 is the Proton acceptor of the active site. The substrate site is built by lysine 340 and lysine 345.

The protein belongs to the glucose-6-phosphate dehydrogenase family.

The enzyme catalyses D-glucose 6-phosphate + NADP(+) = 6-phospho-D-glucono-1,5-lactone + NADPH + H(+). It participates in carbohydrate degradation; pentose phosphate pathway; D-ribulose 5-phosphate from D-glucose 6-phosphate (oxidative stage): step 1/3. In terms of biological role, catalyzes the oxidation of glucose 6-phosphate to 6-phosphogluconolactone. This is Glucose-6-phosphate 1-dehydrogenase from Buchnera aphidicola subsp. Baizongia pistaciae (strain Bp).